The following is a 387-amino-acid chain: Pepsin A (387 aa).

The signal sequence occupies residues methionine 1–cysteine 16. Positions leucine 17–glutamate 61 are cleaved as a propeptide — activation peptide. In terms of domain architecture, Peptidase A1 spans tyrosine 75 to alanine 384. The active site involves aspartate 93. The cysteines at positions 106 and 111 are disulfide-linked. Residue serine 129 is modified to Phosphoserine. A disulfide bridge connects residues cysteine 267 and cysteine 271. The active site involves aspartate 276. Residues cysteine 310 and cysteine 343 are joined by a disulfide bond.

The protein belongs to the peptidase A1 family.

It localises to the secreted. The enzyme catalyses Preferential cleavage: hydrophobic, preferably aromatic, residues in P1 and P1' positions. Cleaves 1-Phe-|-Val-2, 4-Gln-|-His-5, 13-Glu-|-Ala-14, 14-Ala-|-Leu-15, 15-Leu-|-Tyr-16, 16-Tyr-|-Leu-17, 23-Gly-|-Phe-24, 24-Phe-|-Phe-25 and 25-Phe-|-Tyr-26 bonds in the B chain of insulin.. In terms of biological role, shows particularly broad specificity; although bonds involving phenylalanine and leucine are preferred, many others are also cleaved to some extent. This Suncus murinus (Asian house shrew) protein is Pepsin A (PGA).